A 241-amino-acid polypeptide reads, in one-letter code: Corrinoid adenosyltransferase MMAB (241 aa).

The transit peptide at 1–26 (MAVWGPGGRLGLRGCLGARKLLCPRF) directs the protein to the mitochondrion. The interval 27–69 (QSRGPQGVEDGDRPQPSSKTPKVPKIYTKTGDKGFSSTFTGER) is disordered. Residues 54–63 (TKTGDKGFSS) and Lys72 contribute to the ATP site. Ser128 bears the Phosphoserine mark. Position 184–188 (184–188 (RRAER)) interacts with ATP. Lys205 is modified (N6-succinyllysine). Residue Asn208 participates in ATP binding. Lys224 is subject to N6-acetyllysine; alternate. The residue at position 224 (Lys224) is an N6-succinyllysine; alternate.

Belongs to the Cob(I)alamin adenosyltransferase family. Homotrimer.

The protein resides in the mitochondrion. It carries out the reaction cob(I)alamin-[corrinoid adenosyltransferase] + ATP = apo-[corrinoid adenosyltransferase] + adenosylcob(III)alamin + triphosphate. Functionally, converts cob(I)alamin to adenosylcobalamin (adenosylcob(III)alamin), a coenzyme for methylmalonyl-CoA mutase, therefore participates in the final step of the vitamin B12 conversion. Generates adenosylcobalamin (AdoCbl) and directly delivers the cofactor to MUT in a transfer that is stimulated by ATP-binding to MMAB and gated by MMAA. The polypeptide is Corrinoid adenosyltransferase MMAB (Bos taurus (Bovine)).